We begin with the raw amino-acid sequence, 525 residues long: Lysine--tRNA ligase (525 aa).

Residues 44–52 (PSGLPHIGT) carry the 'HIGH' region motif. The 'KMSKS' region motif lies at 290–294 (KISKS). K293 lines the ATP pocket.

This sequence belongs to the class-I aminoacyl-tRNA synthetase family.

Its subcellular location is the cytoplasm. The catalysed reaction is tRNA(Lys) + L-lysine + ATP = L-lysyl-tRNA(Lys) + AMP + diphosphate. The sequence is that of Lysine--tRNA ligase from Rickettsia felis (strain ATCC VR-1525 / URRWXCal2) (Rickettsia azadi).